Consider the following 185-residue polypeptide: Ribosome-recycling factor (185 aa).

This sequence belongs to the RRF family.

The protein localises to the cytoplasm. In terms of biological role, responsible for the release of ribosomes from messenger RNA at the termination of protein biosynthesis. May increase the efficiency of translation by recycling ribosomes from one round of translation to another. In Treponema denticola (strain ATCC 35405 / DSM 14222 / CIP 103919 / JCM 8153 / KCTC 15104), this protein is Ribosome-recycling factor.